The chain runs to 1415 residues: DNA-directed RNA polymerase subunit beta' (1415 aa).

Residues cysteine 72, cysteine 74, cysteine 87, and cysteine 90 each contribute to the Zn(2+) site. Residues aspartate 463, aspartate 465, and aspartate 467 each coordinate Mg(2+). Zn(2+)-binding residues include cysteine 811, cysteine 885, cysteine 892, and cysteine 895.

It belongs to the RNA polymerase beta' chain family. In terms of assembly, the RNAP catalytic core consists of 2 alpha, 1 beta, 1 beta' and 1 omega subunit. When a sigma factor is associated with the core the holoenzyme is formed, which can initiate transcription. Mg(2+) serves as cofactor. The cofactor is Zn(2+).

The enzyme catalyses RNA(n) + a ribonucleoside 5'-triphosphate = RNA(n+1) + diphosphate. Functionally, DNA-dependent RNA polymerase catalyzes the transcription of DNA into RNA using the four ribonucleoside triphosphates as substrates. This Cereibacter sphaeroides (strain ATCC 17025 / ATH 2.4.3) (Rhodobacter sphaeroides) protein is DNA-directed RNA polymerase subunit beta'.